A 117-amino-acid chain; its full sequence is ATP-dependent Clp protease adapter protein ClpS 1 (117 aa).

Belongs to the ClpS family. Binds to the N-terminal domain of the chaperone ClpA.

Functionally, involved in the modulation of the specificity of the ClpAP-mediated ATP-dependent protein degradation. In Agrobacterium fabrum (strain C58 / ATCC 33970) (Agrobacterium tumefaciens (strain C58)), this protein is ATP-dependent Clp protease adapter protein ClpS 1.